Reading from the N-terminus, the 616-residue chain is Homeodomain-interacting protein kinase 4 (616 aa).

Positions 11 to 347 (YDIIEVLGKG…PSAALRHPFV (337 aa)) constitute a Protein kinase domain. ATP-binding positions include 17–25 (LGKGTFGEV) and K40. The active-site Proton acceptor is D136. Residues 485-616 (RHKARKPPAG…SFLQHVTGHH (132 aa)) are disordered. A compositionally biased stretch (polar residues) spans 496–511 (KSDSNLSNLIRLSQVS). S511 is modified (phosphoserine).

It belongs to the protein kinase superfamily. CMGC Ser/Thr protein kinase family. HIPK subfamily. In terms of processing, autophosphorylated.

The protein localises to the cytoplasm. It carries out the reaction L-seryl-[protein] + ATP = O-phospho-L-seryl-[protein] + ADP + H(+). The enzyme catalyses L-threonyl-[protein] + ATP = O-phospho-L-threonyl-[protein] + ADP + H(+). Functionally, protein kinase that phosphorylates TP53, and thus induces TP53 repression of BIRC5 promoter. May act as a corepressor of transcription factors (Potential). This Macaca fascicularis (Crab-eating macaque) protein is Homeodomain-interacting protein kinase 4 (HIPK4).